A 129-amino-acid chain; its full sequence is Succinate dehydrogenase cytochrome b556 subunit (129 aa).

The Cytoplasmic segment spans residues 1 to 26 (MIRNVKKQRPVNLDLQTIRFPITAIA). A helical membrane pass occupies residues 27 to 52 (SILHRVSGVITFVAVGILLWLLGTSL). The Periplasmic segment spans residues 53-68 (SSPEGFEQASAIMGSF). The helical transmembrane segment at 69 to 89 (FVKFIMWGILTALAYHVVVGI) threads the bilayer. His84 provides a ligand contact to heme. The Cytoplasmic portion of the chain corresponds to 90-108 (RHMMMDFGYLEETFEAGKR). Residues 109-129 (SAKISFVITVVLSLLAGVLVW) traverse the membrane as a helical segment.

The protein belongs to the cytochrome b560 family. Part of an enzyme complex containing four subunits: a flavoprotein, an iron-sulfur protein, plus two membrane-anchoring proteins, SdhC and SdhD. The complex can form homotrimers. Requires heme as cofactor.

The protein localises to the cell inner membrane. Its pathway is carbohydrate metabolism; tricarboxylic acid cycle. Functionally, membrane-anchoring subunit of succinate dehydrogenase (SDH). The chain is Succinate dehydrogenase cytochrome b556 subunit (sdhC) from Escherichia coli O157:H7.